The chain runs to 1416 residues: K homology domain-containing protein 4 (1416 aa).

Disordered regions lie at residues 25-76 (NPNG…TSMR), 108-174 (KAEA…TRSS), 196-225 (VNSS…LSQS), 255-320 (QNDE…FPGR), and 341-385 (SSLN…MPKP). Composition is skewed to low complexity over residues 196–213 (VNSS…SANH), 273–285 (QSSF…LDQL), and 341–350 (SSLNPPASGS). A compositionally biased stretch (polar residues) spans 357–369 (GLSSAQPLRSPQP). KH domains lie at 412–504 (FKST…VILD), 508–594 (GLRS…QVSM), 747–816 (FEVR…EELP), 817–892 (AEMS…SVME), and 900–968 (DYIS…DHVP). Disordered regions lie at residues 1215-1240 (AGVS…SGHR) and 1289-1416 (HASG…FDRA). Positions 1219–1239 (VPTSGGIQFPSQPSLHQQSGH) are enriched in polar residues. Low complexity predominate over residues 1343-1374 (QQQAQQQLQYQQQQQQQQQQQQQPGYGMPHQP). Positions 1391-1402 (RNTQNPDSTTMD) are enriched in polar residues.

Its function is as follows. RNA-binding protein that recognizes the sequence AUACCC via its tandem KH domains 3 and 4, probably in order to promote mRNA instability. Plays an essential role in filamentous growth and virulence. In Mycosarcoma maydis (Corn smut fungus), this protein is K homology domain-containing protein 4.